A 135-amino-acid polypeptide reads, in one-letter code: Cytochrome c2 (135 aa).

The first 23 residues, 1–23 (MKKGFLAAGVFAAVAFASGAALA), serve as a signal peptide directing secretion. Residues Cys-37, Cys-40, His-41, and Met-114 each coordinate heme c.

Belongs to the cytochrome c family. Binds 1 heme c group covalently per subunit.

Functionally, cytochrome c2 is found mainly in purple, non-sulfur, photosynthetic bacteria where it functions as the electron donor to the oxidized bacteriochlorophyll in the photophosphorylation pathway. However, it may also have a role in the respiratory chain and is found in some non-photosynthetic bacteria. The chain is Cytochrome c2 (cycA) from Rhodospirillum rubrum (strain ATCC 11170 / ATH 1.1.1 / DSM 467 / LMG 4362 / NCIMB 8255 / S1).